The chain runs to 71 residues: Cell division protein FtsB (71 aa).

Residues 1–3 are Cytoplasmic-facing; that stretch reads MKI. Residues 4-21 traverse the membrane as a helical segment; it reads LKIFLLSLLFWLQYSLWF. Topologically, residues 22–71 are extracellular; sequence GKNGVLDFIKIYRRVTIEKKNNEYLDMRNNQIILEIENFNNHINKDKKKT.

It belongs to the FtsB family.

It is found in the cell membrane. Essential cell division protein. May link together the upstream cell division proteins, which are predominantly cytoplasmic, with the downstream cell division proteins, which are predominantly extracellular. This chain is Cell division protein FtsB, found in Buchnera aphidicola subsp. Acyrthosiphon pisum (strain APS) (Acyrthosiphon pisum symbiotic bacterium).